Reading from the N-terminus, the 874-residue chain is ATP-dependent RNA helicase DDX54 (874 aa).

The interval 1–76 (MAAGRRVGPG…FPTSECVSDV (76 aa)) is disordered. The segment covering 20–30 (WKKKRLRKRRT) has biased composition (basic residues). T30 is modified (phosphothreonine). Phosphoserine is present on residues S33, S38, S40, and S74. The segment covering 39-50 (DSDDGEFEIQAE) has biased composition (acidic residues). The Q motif signature appears at 95–123 (GGFQSMGLSYPVFKGIMKKGYKVPTPIQR). One can recognise a Helicase ATP-binding domain in the interval 126 to 298 (IPVILDGKDV…RAGLTEPVLI (173 aa)). 139–146 (ARTGSGKT) lines the ATP pocket. A DEAD box motif is present at residues 246-249 (DEAD). In terms of domain architecture, Helicase C-terminal spans 328-472 (YLLQNVVRPQ…ARPCEEPSVA (145 aa)). Residues 581–590 (ASSKDPSSQM) show a composition bias toward polar residues. Residues 581-687 (ASSKDPSSQM…PKDFDSERGL (107 aa)) are disordered. Over residues 636–645 (TVEGVFTEVV) the composition is skewed to low complexity. A compositionally biased stretch (basic and acidic residues) spans 664–685 (ETRQRDQEFYVPYRPKDFDSER). Phosphoserine is present on residues S688 and S690. The segment at 712 to 874 (AQNMSRGQQQ…SRKGKMRKRM (163 aa)) is disordered. Over residues 713-722 (QNMSRGQQQL) the composition is skewed to polar residues. 2 stretches are compositionally biased toward basic and acidic residues: residues 737–747 (QEDKKKIKTES) and 755–771 (YKRDLYQKWKQKQKIDD). Residues S774 and S780 each carry the phosphoserine modification. The span at 812–823 (MRSELKTKEQIL) shows a compositional bias: basic and acidic residues. Positions 864-874 (PSRKGKMRKRM) are enriched in basic residues.

It belongs to the DEAD box helicase family. DDX54/DBP10 subfamily. As to quaternary structure, interacts in a hormone-dependent manner with nuclear receptors.

It is found in the nucleus. The protein localises to the nucleolus. It catalyses the reaction ATP + H2O = ADP + phosphate + H(+). In terms of biological role, has RNA-dependent ATPase activity. Represses the transcriptional activity of nuclear receptors. This chain is ATP-dependent RNA helicase DDX54 (Ddx54), found in Mus musculus (Mouse).